The primary structure comprises 199 residues: NAD(P)H dehydrogenase (quinone) (199 aa).

In terms of domain architecture, Flavodoxin-like spans 4–190; that stretch reads VLVLYYSAYG…DGARFQGKRV (187 aa). Residues 10–15 and 78–80 each bind FMN; these read SAYGHM and TRY. Tyrosine 12 contributes to the NAD(+) binding site. Tryptophan 98 contributes to the substrate binding site. Residues 113–119 and histidine 134 each bind FMN; that span reads STATQHG. The disordered stretch occupies residues 157 to 185; the sequence is GGAPYGMTTTADGDGSRQPSEQELDGARF. Residues 163 to 177 are compositionally biased toward polar residues; sequence MTTTADGDGSRQPSE.

It belongs to the WrbA family. It depends on FMN as a cofactor.

It catalyses the reaction a quinone + NADH + H(+) = a quinol + NAD(+). It carries out the reaction a quinone + NADPH + H(+) = a quinol + NADP(+). This is NAD(P)H dehydrogenase (quinone) from Brucella anthropi (strain ATCC 49188 / DSM 6882 / CCUG 24695 / JCM 21032 / LMG 3331 / NBRC 15819 / NCTC 12168 / Alc 37) (Ochrobactrum anthropi).